The sequence spans 246 residues: Thiamine import ATP-binding protein ThiQ (246 aa).

The region spanning 10 to 239 (VKLDALAFAY…QGPPAFARYL (230 aa)) is the ABC transporter domain. 41 to 48 (GPSGSGKS) is a binding site for ATP.

It belongs to the ABC transporter superfamily. Thiamine importer (TC 3.A.1.19.1) family. The complex is composed of two ATP-binding proteins (ThiQ), two transmembrane proteins (ThiP) and a solute-binding protein (ThiB).

It is found in the cell inner membrane. The catalysed reaction is thiamine(out) + ATP + H2O = thiamine(in) + ADP + phosphate + H(+). Its function is as follows. Part of the ABC transporter complex ThiBPQ involved in thiamine import. Responsible for energy coupling to the transport system. The chain is Thiamine import ATP-binding protein ThiQ from Chelativorans sp. (strain BNC1).